The chain runs to 196 residues: Small ribosomal subunit protein uS4c (196 aa).

Residues 89–149 (MRLDNILFRL…DKQRSKALIQ (61 aa)) form the S4 RNA-binding domain.

It belongs to the universal ribosomal protein uS4 family. Part of the 30S ribosomal subunit. Contacts protein S5. The interaction surface between S4 and S5 is involved in control of translational fidelity.

The protein localises to the plastid. Its subcellular location is the chloroplast. Its function is as follows. One of the primary rRNA binding proteins, it binds directly to 16S rRNA where it nucleates assembly of the body of the 30S subunit. With S5 and S12 plays an important role in translational accuracy. The protein is Small ribosomal subunit protein uS4c (rps4) of Asparagus maritimus (Sea asparagus).